The following is a 242-amino-acid chain: MKIFNYKRVPYAEMRAFSVHILTASGSFLAFLGVVAAAEHRFIDMFWWLGLALLVDGIDGPIARKVRVKEVLPNWSGDTLDNIIDYVTYVLLPAFALYQSGMIGEPWSFVAAGMIVVSSAIYYADMGMKTDEYFFSGFPVVWNMIVFTLFVIDASATTALTVVIVSVVLTFLPINFLHPVRVKRLRPLNLGVFFLWSALGIFSLLMHFDTPEWALILFIVTGAYLYVIGAVLQFFPALGRET.

The Cytoplasmic segment spans residues 1–15 (MKIFNYKRVPYAEMR). A helical transmembrane segment spans residues 16–36 (AFSVHILTASGSFLAFLGVVA). Residues 37 to 41 (AAEHR) are Periplasmic-facing. A helical membrane pass occupies residues 42 to 62 (FIDMFWWLGLALLVDGIDGPI). Residues 63 to 76 (ARKVRVKEVLPNWS) are Cytoplasmic-facing. The helical transmembrane segment at 77–97 (GDTLDNIIDYVTYVLLPAFAL) threads the bilayer. At 98-100 (YQS) the chain is on the periplasmic side. A helical membrane pass occupies residues 101 to 121 (GMIGEPWSFVAAGMIVVSSAI). At 122–133 (YYADMGMKTDEY) the chain is on the cytoplasmic side. The helical transmembrane segment at 134–154 (FFSGFPVVWNMIVFTLFVIDA) threads the bilayer. Residues 155-159 (SATTA) are Periplasmic-facing. The helical transmembrane segment at 160–180 (LTVVIVSVVLTFLPINFLHPV) threads the bilayer. Residues 181-187 (RVKRLRP) lie on the Cytoplasmic side of the membrane. Residues 188-208 (LNLGVFFLWSALGIFSLLMHF) form a helical membrane-spanning segment. Residues 209–214 (DTPEWA) lie on the Periplasmic side of the membrane. A helical transmembrane segment spans residues 215-235 (LILFIVTGAYLYVIGAVLQFF). Over 236-242 (PALGRET) the chain is Cytoplasmic.

This sequence belongs to the CDP-alcohol phosphatidyltransferase class-I family. It depends on Mn(2+) as a cofactor.

The protein localises to the cell inner membrane. It catalyses the reaction a CDP-1,2-diacyl-sn-glycerol + choline = a 1,2-diacyl-sn-glycero-3-phosphocholine + CMP + H(+). In terms of biological role, condenses choline with CDP-diglyceride to produce phosphatidylcholine and CMP. This Rhizobium johnstonii (strain DSM 114642 / LMG 32736 / 3841) (Rhizobium leguminosarum bv. viciae) protein is Phosphatidylcholine synthase.